Consider the following 407-residue polypeptide: Carbamoyl phosphate synthase small chain (407 aa).

A CPSase region spans residues Met-1–Ala-205. 3 residues coordinate L-glutamine: Ser-60, Gly-257, and Gly-259. One can recognise a Glutamine amidotransferase type-1 domain in the interval His-209 to Gln-397. The active-site Nucleophile is Cys-286. Residues Leu-287, Gln-290, Asn-328, Gly-330, and Phe-331 each contribute to the L-glutamine site. Active-site residues include His-370 and Glu-372.

The protein belongs to the CarA family. As to quaternary structure, composed of two chains; the small (or glutamine) chain promotes the hydrolysis of glutamine to ammonia, which is used by the large (or ammonia) chain to synthesize carbamoyl phosphate. Tetramer of heterodimers (alpha,beta)4.

It carries out the reaction hydrogencarbonate + L-glutamine + 2 ATP + H2O = carbamoyl phosphate + L-glutamate + 2 ADP + phosphate + 2 H(+). The enzyme catalyses L-glutamine + H2O = L-glutamate + NH4(+). It participates in amino-acid biosynthesis; L-arginine biosynthesis; carbamoyl phosphate from bicarbonate: step 1/1. It functions in the pathway pyrimidine metabolism; UMP biosynthesis via de novo pathway; (S)-dihydroorotate from bicarbonate: step 1/3. Its function is as follows. Small subunit of the glutamine-dependent carbamoyl phosphate synthetase (CPSase). CPSase catalyzes the formation of carbamoyl phosphate from the ammonia moiety of glutamine, carbonate, and phosphate donated by ATP, constituting the first step of 2 biosynthetic pathways, one leading to arginine and/or urea and the other to pyrimidine nucleotides. The small subunit (glutamine amidotransferase) binds and cleaves glutamine to supply the large subunit with the substrate ammonia. This is Carbamoyl phosphate synthase small chain from Brucella abortus (strain S19).